An 89-amino-acid polypeptide reads, in one-letter code: Small ribosomal subunit protein uS15 (89 aa).

It belongs to the universal ribosomal protein uS15 family. Part of the 30S ribosomal subunit. Forms a bridge to the 50S subunit in the 70S ribosome, contacting the 23S rRNA.

Its function is as follows. One of the primary rRNA binding proteins, it binds directly to 16S rRNA where it helps nucleate assembly of the platform of the 30S subunit by binding and bridging several RNA helices of the 16S rRNA. In terms of biological role, forms an intersubunit bridge (bridge B4) with the 23S rRNA of the 50S subunit in the ribosome. This is Small ribosomal subunit protein uS15 from Thermobifida fusca (strain YX).